A 418-amino-acid polypeptide reads, in one-letter code: Probable endo-beta-1,4-glucanase celB (418 aa).

The N-terminal stretch at 1-18 (MVRTFAVTALALLPLVAA) is a signal peptide. 3 N-linked (GlcNAc...) asparagine glycosylation sites follow: asparagine 46, asparagine 118, and asparagine 136. The Nucleophile role is filled by glutamate 215. Glutamate 220 functions as the Proton donor in the catalytic mechanism. Asparagine 234 and asparagine 291 each carry an N-linked (GlcNAc...) asparagine glycan.

It belongs to the glycosyl hydrolase 7 (cellulase C) family.

It is found in the secreted. It carries out the reaction Endohydrolysis of (1-&gt;4)-beta-D-glucosidic linkages in cellulose, lichenin and cereal beta-D-glucans.. In terms of biological role, has endoglucanase activity on substrates containing beta-1,4 glycosidic bonds, like in carboxymethylcellulose (CMC), hydroxyethylcellulose (HEC) and beta-glucan. Involved in the degradation of complex natural cellulosic substrates. The protein is Probable endo-beta-1,4-glucanase celB (celB) of Aspergillus clavatus (strain ATCC 1007 / CBS 513.65 / DSM 816 / NCTC 3887 / NRRL 1 / QM 1276 / 107).